Consider the following 495-residue polypeptide: Putative lon protease homolog (495 aa).

52–59 (GPPGVGKS) contributes to the ATP binding site. The tract at residues 471 to 495 (YSSETTGSQRDSTYNYANMDDRSYE) is disordered. The span at 472–486 (SSETTGSQRDSTYNY) shows a compositional bias: polar residues.

The protein belongs to the peptidase S16 family.

In Thermoplasma volcanium (strain ATCC 51530 / DSM 4299 / JCM 9571 / NBRC 15438 / GSS1), this protein is Putative lon protease homolog.